The sequence spans 397 residues: Subtilisin-like protease 12 (397 aa).

A signal peptide spans 1 to 19 (MSIFKMMLIYFAILWVVNA). The propeptide occupies 20-116 (AQLLDIDPQG…VEPNKEMQVA (97 aa)). Residues 35 to 115 (YIVVMKDRVS…FVEPNKEMQV (81 aa)) form the Inhibitor I9 domain. Residues Asn123, Asn136, and Asn150 are each glycosylated (N-linked (GlcNAc...) asparagine). The 273-residue stretch at 125–397 (TWGLSRISHK…NKLLYNGSGA (273 aa)) folds into the Peptidase S8 domain. Residues Asp157 and His188 each act as charge relay system in the active site. Residues Asn249, Asn305, and Asn334 are each glycosylated (N-linked (GlcNAc...) asparagine). Ser343 serves as the catalytic Charge relay system. 2 N-linked (GlcNAc...) asparagine glycosylation sites follow: Asn385 and Asn393.

Belongs to the peptidase S8 family.

It localises to the secreted. Its function is as follows. Secreted subtilisin-like serine protease with keratinolytic activity that contributes to pathogenicity. The polypeptide is Subtilisin-like protease 12 (SUB12) (Trichophyton verrucosum (strain HKI 0517)).